Reading from the N-terminus, the 84-residue chain is NADH-ubiquinone oxidoreductase chain 4L (84 aa).

2 consecutive transmembrane segments (helical) span residues 19 to 39 (ITLL…LIHI) and 50 to 70 (IFSL…LSIL).

It belongs to the complex I subunit 4L family.

The protein localises to the mitochondrion membrane. It catalyses the reaction a ubiquinone + NADH + 5 H(+)(in) = a ubiquinol + NAD(+) + 4 H(+)(out). Functionally, core subunit of the mitochondrial membrane respiratory chain NADH dehydrogenase (Complex I) that is believed to belong to the minimal assembly required for catalysis. Complex I functions in the transfer of electrons from NADH to the respiratory chain. The immediate electron acceptor for the enzyme is believed to be ubiquinone. This Candida albicans (strain SC5314 / ATCC MYA-2876) (Yeast) protein is NADH-ubiquinone oxidoreductase chain 4L (NAD4L).